Here is a 382-residue protein sequence, read N- to C-terminus: Lipid-A-disaccharide synthase (382 aa).

This sequence belongs to the LpxB family.

It carries out the reaction 2-N,3-O-bis[(3R)-3-hydroxytetradecanoyl]-alpha-D-glucosaminyl 1-phosphate + UDP-2-N,3-O-bis[(3R)-3-hydroxytetradecanoyl]-alpha-D-glucosamine = lipid A disaccharide (E. coli) + UDP + H(+). The catalysed reaction is a lipid X + a UDP-2-N,3-O-bis[(3R)-3-hydroxyacyl]-alpha-D-glucosamine = a lipid A disaccharide + UDP + H(+). Its pathway is glycolipid biosynthesis; lipid IV(A) biosynthesis; lipid IV(A) from (3R)-3-hydroxytetradecanoyl-[acyl-carrier-protein] and UDP-N-acetyl-alpha-D-glucosamine: step 5/6. Functionally, condensation of UDP-2,3-diacylglucosamine and 2,3-diacylglucosamine-1-phosphate to form lipid A disaccharide, a precursor of lipid A, a phosphorylated glycolipid that anchors the lipopolysaccharide to the outer membrane of the cell. This chain is Lipid-A-disaccharide synthase, found in Escherichia coli O157:H7.